The primary structure comprises 410 residues: Arginine biosynthesis bifunctional protein ArgJ (410 aa).

Substrate-binding residues include T158, K184, T195, E282, N405, and S410. The active-site Nucleophile is the T195.

This sequence belongs to the ArgJ family. In terms of assembly, heterotetramer of two alpha and two beta chains.

The protein resides in the cytoplasm. The catalysed reaction is N(2)-acetyl-L-ornithine + L-glutamate = N-acetyl-L-glutamate + L-ornithine. The enzyme catalyses L-glutamate + acetyl-CoA = N-acetyl-L-glutamate + CoA + H(+). It functions in the pathway amino-acid biosynthesis; L-arginine biosynthesis; L-ornithine and N-acetyl-L-glutamate from L-glutamate and N(2)-acetyl-L-ornithine (cyclic): step 1/1. It participates in amino-acid biosynthesis; L-arginine biosynthesis; N(2)-acetyl-L-ornithine from L-glutamate: step 1/4. Functionally, catalyzes two activities which are involved in the cyclic version of arginine biosynthesis: the synthesis of N-acetylglutamate from glutamate and acetyl-CoA as the acetyl donor, and of ornithine by transacetylation between N(2)-acetylornithine and glutamate. This chain is Arginine biosynthesis bifunctional protein ArgJ, found in Bartonella henselae (strain ATCC 49882 / DSM 28221 / CCUG 30454 / Houston 1) (Rochalimaea henselae).